Here is a 2896-residue protein sequence, read N- to C-terminus: 3'-5' exoribonuclease HELZ2 (2896 aa).

C3H1-type zinc fingers lie at residues 90-114 (VCHY…RSRE) and 217-246 (GQPP…HSAV). The segment at 287 to 311 (LYCPACLVTCHSQEAFENHCASSEH) adopts a C2H2-type; atypical zinc-finger fold. The C3H1-type 3 zinc finger occupies 327 to 357 (SPPPGLSKFELCPKPDLCEYGDACTKAHSAQ). The UvrD-like helicase ATP-binding domain occupies 770–1126 (VALIAGWGPG…VVLSTVHTCQ (357 aa)). 791 to 798 (GPFGTGKT) is a binding site for ATP. An interaction with THRAP3 region spans residues 810–1306 (RRPETKVLIC…ESTEAEDAEA (497 aa)). A DEAA box motif is present at residues 914 to 917 (DEAA). At S1253 the chain carries Phosphoserine. 3 consecutive short sequence motifs (LXXLL motif) follow at residues 1322 to 1326 (LRELL), 1365 to 1369 (LRKLL), and 1420 to 1424 (LVQLL). The RNB domain occupies 1581–1938 (REDCRAFLTF…VLQRQILLAL (358 aa)). Positions 2259–2263 (LEGLP) match the LXXLL motif 4 motif. The tract at residues 2382–2896 (PSRFLERQTY…RVCRRPTMPS (515 aa)) is interaction with THRAP3. Residues 2400–2675 (LNPSQNVAVR…HMLDTQYRMH (276 aa)) enclose the UvrD-like helicase ATP-binding 2 domain. 2421–2428 (GPPGTGKT) serves as a coordination point for ATP. The short motif at 2476–2480 (LAGLL) is the LXXLL motif 5 element.

It belongs to the DNA2/NAM7 helicase family. As to quaternary structure, interacts with PPARA (via DNA-binding domain) and PPARG; the interaction stimulates the transcriptional activity of PPARA and PPARG. Interacts with THRAP3; the interaction is direct and HELZ2 and THRAP3 synergistically enhance the transcriptional activity of PPARG. It is probably part of the peroxisome proliferator activated receptor alpha interacting complex (PRIC). As to expression, expressed in various tissues including heart, pancreas, skeletal muscle, colon, spleen, liver, kidney, lung, peripheral blood and placenta.

The protein resides in the cytoplasm. It catalyses the reaction Exonucleolytic cleavage in the 3'- to 5'-direction to yield nucleoside 5'-phosphates.. The catalysed reaction is ATP + H2O = ADP + phosphate + H(+). Its function is as follows. Can degrade highly structured RNAs through its concerted ATP-dependent RNA helicase and 3' to 5' exoribonuclease activities. Shows a strong preference for pyrimidine over purine residues for its nuclease activity. Acts as a transcriptional coactivator for a number of nuclear receptors including PPARA, PPARG, THRA, THRB and RXRA. This is 3'-5' exoribonuclease HELZ2 from Homo sapiens (Human).